A 180-amino-acid polypeptide reads, in one-letter code: MVGSGIPALGLLLLMQGSADGNGIQGFFYPWSCEGDVWDRESCGGQAAIENPNLCLRLRCCYRDGVCYHQRPDENMRRKHMWALGWTCGGLLFLITSICLFWWARRHDMLRLPWFLKGKCDLSRTVSLLSKDRTPSEKKTPSVGSIPPAAPTEGALDVSGGTEGEGTEGGEETEGGDEDD.

The N-terminal stretch at 1–21 is a signal peptide; sequence MVGSGIPALGLLLLMQGSADG. Over 22-81 the chain is Extracellular; sequence NGIQGFFYPWSCEGDVWDRESCGGQAAIENPNLCLRLRCCYRDGVCYHQRPDENMRRKHM. A P-type domain is found at 31–71; the sequence is WSCEGDVWDRESCGGQAAIENPNLCLRLRCCYRDGVCYHQR. Intrachain disulfides connect Cys33-Cys61, Cys43-Cys60, and Cys55-Cys67. The helical transmembrane segment at 82-102 threads the bilayer; the sequence is WALGWTCGGLLFLITSICLFW. The Cytoplasmic portion of the chain corresponds to 103–180; it reads WARRHDMLRL…EETEGGDEDD (78 aa). Residues 131-140 are compositionally biased toward basic and acidic residues; sequence KDRTPSEKKT. The disordered stretch occupies residues 131–180; it reads KDRTPSEKKTPSVGSIPPAAPTEGALDVSGGTEGEGTEGGEETEGGDEDD. Residues 165–180 show a composition bias toward acidic residues; the sequence is EGTEGGEETEGGDEDD.

The protein localises to the membrane. This is Transmembrane protein 190 (TMEM190) from Bos taurus (Bovine).